The primary structure comprises 47 residues: Photosystem II reaction center protein K (47 aa).

Positions 1 to 10 (MASFTLDLLA) are excised as a propeptide. A helical transmembrane segment spans residues 19-39 (FSPLIDILPLIPVFFLLLAFV).

Belongs to the PsbK family. As to quaternary structure, PSII is composed of 1 copy each of membrane proteins PsbA, PsbB, PsbC, PsbD, PsbE, PsbF, PsbH, PsbI, PsbJ, PsbK, PsbL, PsbM, PsbT, PsbX, PsbY, PsbZ, Psb30/Ycf12, peripheral proteins PsbO, CyanoQ (PsbQ), PsbU, PsbV and a large number of cofactors. It forms dimeric complexes.

Its subcellular location is the cellular thylakoid membrane. One of the components of the core complex of photosystem II (PSII). PSII is a light-driven water:plastoquinone oxidoreductase that uses light energy to abstract electrons from H(2)O, generating O(2) and a proton gradient subsequently used for ATP formation. It consists of a core antenna complex that captures photons, and an electron transfer chain that converts photonic excitation into a charge separation. The polypeptide is Photosystem II reaction center protein K (Parasynechococcus marenigrum (strain WH8102)).